Here is a 49-residue protein sequence, read N- to C-terminus: MVFLLFLSFVLSSIFLVPLVYMLNKVFLFNRNRVVNYDSIRKLALTRME.

The first 22 residues, 1–22 (MVFLLFLSFVLSSIFLVPLVYM), serve as a signal peptide directing secretion.

The protein localises to the secreted. This is an uncharacterized protein from Dictyostelium discoideum (Social amoeba).